The following is a 130-amino-acid chain: Small ribosomal subunit protein uS8 (130 aa).

It belongs to the universal ribosomal protein uS8 family. Part of the 30S ribosomal subunit.

One of the primary rRNA binding proteins, it binds directly to 16S rRNA central domain where it helps coordinate assembly of the platform of the 30S subunit. The sequence is that of Small ribosomal subunit protein uS8 from Methanosphaerula palustris (strain ATCC BAA-1556 / DSM 19958 / E1-9c).